The primary structure comprises 371 residues: Cysteine proteinase 1 (371 aa).

A signal peptide spans 1 to 18; sequence MAHRVLLLLSLASAAAVA. Residues 19–136 constitute a propeptide, activation peptide; that stretch reads AAVDAEDPLI…HEAPVLPTDG (118 aa). 2 cysteine pairs are disulfide-bonded: C158/C208 and C192/C241. The active site involves C161. The N-linked (GlcNAc...) asparagine glycan is linked to N254. A disulfide bridge links C297 with C354. Residues H303 and N330 contribute to the active site.

The protein belongs to the peptidase C1 family. As to expression, expressed during the late stages of seed ripening, in mature seeds and during germination.

Its function is as follows. Involved in the degradation of the storage protein zein. May play a role in proteolysis during emergencies. This Zea mays (Maize) protein is Cysteine proteinase 1 (CCP1).